Consider the following 398-residue polypeptide: Putative glutamate--cysteine ligase 2 (398 aa).

It belongs to the glutamate--cysteine ligase type 2 family. YbdK subfamily.

The catalysed reaction is L-cysteine + L-glutamate + ATP = gamma-L-glutamyl-L-cysteine + ADP + phosphate + H(+). In terms of biological role, ATP-dependent carboxylate-amine ligase which exhibits weak glutamate--cysteine ligase activity. The sequence is that of Putative glutamate--cysteine ligase 2 from Micrococcus luteus (strain ATCC 4698 / DSM 20030 / JCM 1464 / CCM 169 / CCUG 5858 / IAM 1056 / NBRC 3333 / NCIMB 9278 / NCTC 2665 / VKM Ac-2230) (Micrococcus lysodeikticus).